The sequence spans 340 residues: Phosphate acyltransferase (340 aa).

This sequence belongs to the PlsX family. In terms of assembly, homodimer. Probably interacts with PlsY.

Its subcellular location is the cytoplasm. It carries out the reaction a fatty acyl-[ACP] + phosphate = an acyl phosphate + holo-[ACP]. It participates in lipid metabolism; phospholipid metabolism. Functionally, catalyzes the reversible formation of acyl-phosphate (acyl-PO(4)) from acyl-[acyl-carrier-protein] (acyl-ACP). This enzyme utilizes acyl-ACP as fatty acyl donor, but not acyl-CoA. This chain is Phosphate acyltransferase, found in Pseudomonas savastanoi pv. phaseolicola (strain 1448A / Race 6) (Pseudomonas syringae pv. phaseolicola (strain 1448A / Race 6)).